A 456-amino-acid chain; its full sequence is Ribosome assembly protein METTL17, mitochondrial (456 aa).

The transit peptide at 1-19 directs the protein to the mitochondrion; that stretch reads MAAALKCLLTLGRWCPGLG. [4Fe-4S] cluster contacts are provided by cysteine 333, cysteine 339, cysteine 347, and cysteine 404.

This sequence belongs to the methyltransferase superfamily. Rsm22 family. Associates with the mitochondrial ribosome (mitoribosome).

Its subcellular location is the mitochondrion matrix. Its function is as follows. Mitochondrial ribosome (mitoribosome) assembly factor. Binds at the interface of the head and body domains of the mitochondrial small ribosomal subunit (mt-SSU), occluding the mRNA channel and preventing compaction of the head domain towards the body. Probable inactive methyltransferase: retains the characteristic folding and ability to bind S-adenosyl-L-methionine, but it probably lost its methyltransferase activity. The sequence is that of Ribosome assembly protein METTL17, mitochondrial from Homo sapiens (Human).